The sequence spans 177 residues: R-phycoerythrin beta chain (177 aa).

(2R,3E)-phycoerythrobilin is bound by residues asparagine 35 and aspartate 39. Phycourobilin contacts are provided by cysteine 50, aspartate 54, and cysteine 61. (2R,3E)-phycoerythrobilin contacts are provided by residues asparagine 72, arginine 77 to arginine 78, cysteine 82, and arginine 84 to aspartate 85. Asparagine 72 bears the N4-methylasparagine mark. A phycourobilin-binding site is contributed by serine 147–glutamine 148. Residues isoleucine 154 and cysteine 158 each contribute to the (2R,3E)-phycoerythrobilin site.

This sequence belongs to the phycobiliprotein family. In terms of assembly, heterododecamer of 6 alpha and 6 beta chains. The basic functional unit of phycobiliproteins is a ring-shaped hexamer formed from two back-to-back trimers contacting via the alpha chain subunits. The trimers are composed of alpha/beta subunit heterodimers arranged around a three-fold axis of symmetry. The phycoerythrins also contain a gamma subunit which is located in the center of the hexamer. In terms of processing, contains two covalently linked phycoerythrobilin chromophores and one covalently linked phycourobilin chromophore.

Its subcellular location is the plastid. The protein resides in the chloroplast thylakoid membrane. In terms of biological role, light-harvesting photosynthetic tetrapyrrole chromophore-protein from the phycobiliprotein complex. This Agarophyton chilense (Red seaweed) protein is R-phycoerythrin beta chain (rpeB).